We begin with the raw amino-acid sequence, 887 residues long: Phosphatidylinositol 3-kinase catalytic subunit type 3 (887 aa).

Residues 35–184 form the C2 PI3K-type domain; that stretch reads YKAVLEDPML…LAKLTKAHRQ (150 aa). The disordered stretch occupies residues 149–170; sequence VEADGSEPTRTPGRTSSTLSED. Residues 156 to 170 are compositionally biased toward polar residues; sequence PTRTPGRTSSTLSED. T163 is subject to Phosphothreonine; by AMPK. S165 is subject to Phosphoserine; by AMPK. Phosphoserine occurs at positions 244, 261, and 282. In terms of domain architecture, PIK helical spans 283 to 520; that stretch reads DHDLKPNATT…PKTHEMYLNV (238 aa). Positions 415-466 are disordered; the sequence is LEPTKKDSQTSASESLSNSGVSSGDIDSSQIITNPLPPVASPPPASKAKEVS. Low complexity predominate over residues 425-437; the sequence is SASESLSNSGVSS. Residues 449–459 show a composition bias toward pro residues; the sequence is PLPPVASPPPA. The region spanning 605–871 is the PI3K/PI4K catalytic domain; the sequence is IPETATLFKS…LIDESVHALF (267 aa). Positions 611–617 are G-loop; the sequence is LFKSALM. The catalytic loop stretch occupies residues 740 to 748; it reads GVGDRHLDN. The tract at residues 759–780 is activation loop; that stretch reads HIDFGYILGRDPKPLPPPMKLN.

Belongs to the PI3/PI4-kinase family. In terms of assembly, component of the PI3K (PI3KC3/PI3K-III/class III phosphatidylinositol 3-kinase) complex the core of which is composed of the catalytic subunit PIK3C3, the regulatory subunit PIK3R4 and BECN1 associating with additional regulatory/auxiliary subunits to form alternative complex forms. Alternative complex forms containing a fourth regulatory subunit in a mutually exclusive manner are: the PI3K complex I (PI3KC3-C1) containing ATG14, and the PI3K complex II (PI3KC3-C2) containing UVRAG. PI3KC3-C1 displays a V-shaped architecture with PIK3R4 serving as a bridge between PIK3C3 and the ATG14:BECN1 subcomplex. Both, PI3KC3-C1 and PI3KC3-C2, can associate with further regulatory subunits such as RUBCN, SH3GLB1/Bif-1 and AMBRA1. PI3KC3-C1 probably associates with PIK3CB. Interacts with RAB7A in the presence of PIK3R4. Interacts with AMBRA1. Interacts with BECN1P1/BECN2. Interacts with SLAMF1. May be a component of a complex composed of RAB5A (in GDP-bound form), DYN2 and PIK3C3. Interacts with NCKAP1L. Interacts with ATG14; this interaction is increased in the absence of TMEM39A. Interacts with STEEP1; the interaction is STING1-dependent and required for trafficking of STING1 from the endoplasmic reticulum. Interacts with YWHAG. Interacts with ARMC3. Mn(2+) serves as cofactor. In terms of processing, ubiquitinated via 'Lys-29'- and 'Lys-48'-linked ubiquitination by UBE3C, promoting its degradation. Deubiquitination by ZRANB1/TRABID promotes its stabilization, leading to autophagosome maturation.

It is found in the midbody. Its subcellular location is the late endosome. It localises to the cytoplasmic vesicle. The protein resides in the autophagosome. It catalyses the reaction a 1,2-diacyl-sn-glycero-3-phospho-(1D-myo-inositol) + ATP = a 1,2-diacyl-sn-glycero-3-phospho-(1D-myo-inositol-3-phosphate) + ADP + H(+). In terms of biological role, catalytic subunit of the PI3K complex that mediates formation of phosphatidylinositol 3-phosphate; different complex forms are believed to play a role in multiple membrane trafficking pathways: PI3KC3-C1 is involved in initiation of autophagosomes and PI3KC3-C2 in maturation of autophagosomes and endocytosis. As part of PI3KC3-C1, promotes endoplasmic reticulum membrane curvature formation prior to vesicle budding. Involved in regulation of degradative endocytic trafficking and required for the abscission step in cytokinesis, probably in the context of PI3KC3-C2. Involved in the transport of lysosomal enzyme precursors to lysosomes. Required for transport from early to late endosomes. This Mus musculus (Mouse) protein is Phosphatidylinositol 3-kinase catalytic subunit type 3.